The primary structure comprises 414 residues: 2,3-diketo-5-methylthiopentyl-1-phosphate enolase (414 aa).

Residue K99 is the Proton acceptor of the active site. Residues K148, 174–177, H265, G338, and 360–361 contribute to the substrate site; these read KDDE and GG. K174, D176, and E177 together coordinate Mg(2+). K174 is modified (N6-carboxylysine).

This sequence belongs to the RuBisCO large chain family. Type IV subfamily. In terms of assembly, homodimer. The cofactor is Mg(2+).

It carries out the reaction 5-methylsulfanyl-2,3-dioxopentyl phosphate = 2-hydroxy-5-methylsulfanyl-3-oxopent-1-enyl phosphate. Its pathway is amino-acid biosynthesis; L-methionine biosynthesis via salvage pathway; L-methionine from S-methyl-5-thio-alpha-D-ribose 1-phosphate: step 3/6. Catalyzes the enolization of 2,3-diketo-5-methylthiopentyl-1-phosphate (DK-MTP-1-P) into 2-hydroxy-3-keto-5-methylthiopentenyl-1-phosphate (HK-MTPenyl-1-P). In Bacillus cereus (strain Q1), this protein is 2,3-diketo-5-methylthiopentyl-1-phosphate enolase.